Reading from the N-terminus, the 360-residue chain is Homoserine O-acetyltransferase (360 aa).

Residues 41-344 (NAILICHALT…DYGHDAFLVD (304 aa)) form the AB hydrolase-1 domain. Catalysis depends on Ser-144, which acts as the Nucleophile. Substrate is bound at residue Arg-213. Residues Asp-305 and His-338 contribute to the active site. Asp-339 serves as a coordination point for substrate.

This sequence belongs to the AB hydrolase superfamily. MetX family. In terms of assembly, homodimer.

The protein localises to the cytoplasm. It carries out the reaction L-homoserine + acetyl-CoA = O-acetyl-L-homoserine + CoA. It participates in amino-acid biosynthesis; L-methionine biosynthesis via de novo pathway; O-acetyl-L-homoserine from L-homoserine: step 1/1. Its function is as follows. Transfers an acetyl group from acetyl-CoA to L-homoserine, forming acetyl-L-homoserine. The polypeptide is Homoserine O-acetyltransferase (Pasteurella multocida (strain Pm70)).